A 166-amino-acid polypeptide reads, in one-letter code: Peptide methionine sulfoxide reductase MsrA (166 aa).

Residue Cys11 is part of the active site.

This sequence belongs to the MsrA Met sulfoxide reductase family.

The catalysed reaction is L-methionyl-[protein] + [thioredoxin]-disulfide + H2O = L-methionyl-(S)-S-oxide-[protein] + [thioredoxin]-dithiol. It carries out the reaction [thioredoxin]-disulfide + L-methionine + H2O = L-methionine (S)-S-oxide + [thioredoxin]-dithiol. In terms of biological role, has an important function as a repair enzyme for proteins that have been inactivated by oxidation. Catalyzes the reversible oxidation-reduction of methionine sulfoxide in proteins to methionine. The sequence is that of Peptide methionine sulfoxide reductase MsrA from Mycoplasmopsis pulmonis (strain UAB CTIP) (Mycoplasma pulmonis).